The primary structure comprises 342 residues: Platelet-activating factor receptor (342 aa).

Topologically, residues methionine 1–threonine 16 are extracellular. N-linked (GlcNAc...) asparagine glycosylation is present at asparagine 4. Residues leucine 17–tryptophan 38 traverse the membrane as a helical segment. Residues valine 39–isoleucine 54 lie on the Cytoplasmic side of the membrane. Residues phenylalanine 55 to isoleucine 74 traverse the membrane as a helical segment. Residues valine 75–asparagine 91 are Extracellular-facing. A disulfide bond links cysteine 90 and cysteine 173. The helical transmembrane segment at leucine 92–tyrosine 113 threads the bilayer. Residues asparagine 114 to arginine 133 are Cytoplasmic-facing. The helical transmembrane segment at glycine 134–leucine 155 threads the bilayer. Topologically, residues aspartate 156 to valine 184 are extracellular. Residue asparagine 169 is glycosylated (N-linked (GlcNAc...) asparagine). The chain crosses the membrane as a helical span at residues leucine 185–cysteine 205. Residues asparagine 206–methionine 233 are Cytoplasmic-facing. The chain crosses the membrane as a helical span at residues valine 234–proline 254. Over tryptophan 255–glutamine 276 the chain is Extracellular. The helical transmembrane segment at valine 277–leucine 296 threads the bilayer. The Cytoplasmic portion of the chain corresponds to threonine 297 to tyrosine 342.

The protein belongs to the G-protein coupled receptor 1 family. Interacts with ARRB1.

The protein localises to the cell membrane. In terms of biological role, receptor for platelet activating factor, a chemotactic phospholipid mediator that possesses potent inflammatory, smooth-muscle contractile and hypotensive activity. Seems to mediate its action via a G protein that activates a phosphatidylinositol-calcium second messenger system. This chain is Platelet-activating factor receptor, found in Capra hircus (Goat).